The sequence spans 199 residues: Large ribosomal subunit protein bL9 (199 aa).

Basic and acidic residues predominate over residues 149-166 (AEAERINRGEDINSRQED). Residues 149–199 (AEAERINRGEDINSRQEDQDAAAEAIAAAGEFFDPEAQDETPETEAASEQQ) are disordered. Positions 181-191 (FDPEAQDETPE) are enriched in acidic residues.

It belongs to the bacterial ribosomal protein bL9 family.

Functionally, binds to the 23S rRNA. This is Large ribosomal subunit protein bL9 from Afipia carboxidovorans (strain ATCC 49405 / DSM 1227 / KCTC 32145 / OM5) (Oligotropha carboxidovorans).